Reading from the N-terminus, the 278-residue chain is Protein canopy homolog 3 (278 aa).

A signal peptide spans 1-30 (MDSMPEPASRCLLLLPLLLLLLLLLPAPEL). A Saposin B-type domain is found at 47–271 (SKCEVCKYVA…EGIQKASPLT (225 aa)). 3 disulfides stabilise this stretch: cysteine 49-cysteine 206, cysteine 52-cysteine 194, and cysteine 104-cysteine 166. Asparagine 153 carries an N-linked (GlcNAc...) asparagine glycan. The stretch at 153–179 (NETSAEVADLKKQCDVLVEEFEEVIED) forms a coiled coil. The disordered stretch occupies residues 215–278 (KGDTAALGGK…PLTHSPPDEL (64 aa)). A compositionally biased stretch (low complexity) spans 233–243 (AKAAGGRSSSS).

It belongs to the canopy family. In terms of assembly, interacts with HSP90B1; this interaction is disrupted in the presence of ATP. Interacts with TLR1, TLR2, TLR4 and TLR9. Strongest interaction with TLR4.

Its subcellular location is the endoplasmic reticulum. In terms of biological role, toll-like receptor (TLR)-specific co-chaperone for HSP90B1. Required for proper TLR folding, except that of TLR3, and hence controls TLR exit from the endoplasmic reticulum. Consequently, required for both innate and adaptive immune responses. In Homo sapiens (Human), this protein is Protein canopy homolog 3 (CNPY3).